Here is a 49-residue protein sequence, read N- to C-terminus: MRNIIILACTECKQKNYTTTKNKRTMQGRFEIKKYCRFCRSHKLHRETK.

This sequence belongs to the bacterial ribosomal protein bL33 family.

The chain is Large ribosomal subunit protein bL33 from Syntrophus aciditrophicus (strain SB).